The primary structure comprises 547 residues: CTP synthase (547 aa).

The tract at residues 1–273 (MNNKKLKSKF…DHFILNHFQL (273 aa)) is amidoligase domain. Ser-19 contacts CTP. Ser-19 is a binding site for UTP. 20–25 (SLGKGI) is a binding site for ATP. Residue Tyr-60 coordinates L-glutamine. Asp-77 provides a ligand contact to ATP. Mg(2+)-binding residues include Asp-77 and Glu-147. Residues 154–156 (DIE), 194–199 (KTKPTQ), and Lys-230 each bind CTP. UTP contacts are provided by residues 194 to 199 (KTKPTQ) and Lys-230. The Glutamine amidotransferase type-1 domain occupies 306-539 (YVILHDAYLS…VEAALLKNGK (234 aa)). Residue Gly-361 coordinates L-glutamine. Cys-388 acts as the Nucleophile; for glutamine hydrolysis in catalysis. Residues 389–392 (FGMQ), Glu-412, and Arg-466 each bind L-glutamine. Residues His-512 and Glu-514 contribute to the active site.

It belongs to the CTP synthase family. Homotetramer.

It carries out the reaction UTP + L-glutamine + ATP + H2O = CTP + L-glutamate + ADP + phosphate + 2 H(+). The catalysed reaction is L-glutamine + H2O = L-glutamate + NH4(+). The enzyme catalyses UTP + NH4(+) + ATP = CTP + ADP + phosphate + 2 H(+). It participates in pyrimidine metabolism; CTP biosynthesis via de novo pathway; CTP from UDP: step 2/2. With respect to regulation, allosterically activated by GTP, when glutamine is the substrate; GTP has no effect on the reaction when ammonia is the substrate. The allosteric effector GTP functions by stabilizing the protein conformation that binds the tetrahedral intermediate(s) formed during glutamine hydrolysis. Inhibited by the product CTP, via allosteric rather than competitive inhibition. In terms of biological role, catalyzes the ATP-dependent amination of UTP to CTP with either L-glutamine or ammonia as the source of nitrogen. Regulates intracellular CTP levels through interactions with the four ribonucleotide triphosphates. The polypeptide is CTP synthase (Phytoplasma australiense).